The following is a 668-amino-acid chain: Probable 6-phosphofructo-2-kinase PB17E12.14c (668 aa).

Over residues 1–14 (MSNNNNKDDSELQS) the composition is skewed to basic and acidic residues. Disordered regions lie at residues 1 to 105 (MSNN…GSRP) and 136 to 185 (HRVP…EATN). Polar residues-rich tracts occupy residues 46 to 56 (NDHSFTNTDSV), 65 to 86 (SPVSTLTSNSANFSDSSLQNSP), and 164 to 184 (SSMSIPGQTSIVSSNNGSEAT). 197–204 (GLPARGKS) lines the ATP pocket. Residues aspartate 281 and cysteine 312 contribute to the active site. Residue arginine 346 participates in beta-D-fructose 6-phosphate binding. The active site involves glutamate 540. Histidine 608 acts as the Proton donor in catalysis.

It carries out the reaction beta-D-fructose 6-phosphate + ATP = beta-D-fructose 2,6-bisphosphate + ADP + H(+). Its function is as follows. Synthesis of fructose 2,6-bisphosphate. The polypeptide is Probable 6-phosphofructo-2-kinase PB17E12.14c (Schizosaccharomyces pombe (strain 972 / ATCC 24843) (Fission yeast)).